The following is a 325-amino-acid chain: Treponemal membrane protein B (325 aa).

Positions 1–24 (MKTRNFSLVSALYVLLGVPLFVSA) are cleaved as a signal peptide. Residues 159-166 (EAARKAAE) form an EAARKAAE repeat. The ARKLEEQRIAAQKAQEERKRAEE repeat unit spans residues 167-189 (ARKLEEQRIAAQKAQEERKRAEE). Residues 176-224 (AAQKAQEERKRAEEEAARKAAEARKLEEQRIAAQKAQEERKRAEEEAAR) form a disordered region. An EAARKAAE repeat occupies 190–197 (EAARKAAE). An ARKLEEQRIAAQKAQEERKRAEE repeat occupies 198 to 220 (ARKLEEQRIAAQKAQEERKRAEE). Residues 221 to 228 (EAARKAAE) form an EAARKAAE repeat. The EAARKAEE repeat unit spans residues 229-236 (EAARKAEE).

The protein to T.phagedenis TmpB.

It is found in the cell outer membrane. In terms of biological role, tmp may serve as a porin or transport protein for large molecules. This Treponema pallidum (strain Nichols) protein is Treponemal membrane protein B (tmpB).